The chain runs to 230 residues: Orotidine 5'-phosphate decarboxylase (230 aa).

Substrate is bound by residues aspartate 11, lysine 34, 61–70, threonine 117, arginine 179, glutamine 188, glycine 208, and arginine 209; that span reads DLKLHDIPNT. Lysine 63 serves as the catalytic Proton donor.

It belongs to the OMP decarboxylase family. Type 1 subfamily. As to quaternary structure, homodimer.

It carries out the reaction orotidine 5'-phosphate + H(+) = UMP + CO2. The protein operates within pyrimidine metabolism; UMP biosynthesis via de novo pathway; UMP from orotate: step 2/2. In terms of biological role, catalyzes the decarboxylation of orotidine 5'-monophosphate (OMP) to uridine 5'-monophosphate (UMP). In Streptococcus pyogenes serotype M1, this protein is Orotidine 5'-phosphate decarboxylase.